The sequence spans 957 residues: Nitrite reductase [NAD(P)H] large subunit (957 aa).

Residue 44–79 coordinates FAD; it reads YDRVHLTEYFAGRSAESLSLVEGDFFTQHGIELRLS. 193–225 lines the NAD(+) pocket; it reads LREKISELGVGVHTSKATTEIVRNEQGLQLNFR. [2Fe-2S] cluster-binding residues include Cys423, Cys425, Cys457, and Cys460. Positions 639, 645, 679, and 683 each coordinate [4Fe-4S] cluster. Cys683 provides a ligand contact to siroheme.

Belongs to the nitrite and sulfite reductase 4Fe-4S domain family. In terms of assembly, homodimer which associates with NirD. The cofactor is siroheme. [2Fe-2S] cluster serves as cofactor. Requires [4Fe-4S] cluster as cofactor. It depends on FAD as a cofactor.

The catalysed reaction is NH4(+) + 3 NADP(+) + 2 H2O = nitrite + 3 NADPH + 5 H(+). It catalyses the reaction NH4(+) + 3 NAD(+) + 2 H2O = nitrite + 3 NADH + 5 H(+). The protein operates within nitrogen metabolism; nitrate reduction (assimilation). This Klebsiella oxytoca protein is Nitrite reductase [NAD(P)H] large subunit (nasB).